We begin with the raw amino-acid sequence, 405 residues long: Serine/threonine transporter SstT (405 aa).

Transmembrane regions (helical) follow at residues 13-33 (GNLVLQILAGILLGAAMATFS), 43-63 (IGNLFVGALKAVAPVLVFILV), 81-101 (IVVLYLFGTFSAALTAVILSF), 140-160 (ALMNANYIGILAWGVGLGLAL), 191-211 (FGIFGLVASTFATTGFDALAG), 215-235 (LLAVLLGAMAFIALVVNPMIV), 297-317 (MAGAAITITVLTLAAVHTMGI), 338-358 (ASGVAGGSLLLIPLACGLFGI), and 362-382 (IAMQVVAVGFIIGVIQDSAET).

The protein belongs to the dicarboxylate/amino acid:cation symporter (DAACS) (TC 2.A.23) family.

Its subcellular location is the cell inner membrane. The catalysed reaction is L-serine(in) + Na(+)(in) = L-serine(out) + Na(+)(out). It catalyses the reaction L-threonine(in) + Na(+)(in) = L-threonine(out) + Na(+)(out). Involved in the import of serine and threonine into the cell, with the concomitant import of sodium (symport system). The polypeptide is Serine/threonine transporter SstT (Vibrio cholerae serotype O1 (strain ATCC 39315 / El Tor Inaba N16961)).